The chain runs to 155 residues: SsrA-binding protein (155 aa).

This sequence belongs to the SmpB family.

The protein resides in the cytoplasm. Required for rescue of stalled ribosomes mediated by trans-translation. Binds to transfer-messenger RNA (tmRNA), required for stable association of tmRNA with ribosomes. tmRNA and SmpB together mimic tRNA shape, replacing the anticodon stem-loop with SmpB. tmRNA is encoded by the ssrA gene; the 2 termini fold to resemble tRNA(Ala) and it encodes a 'tag peptide', a short internal open reading frame. During trans-translation Ala-aminoacylated tmRNA acts like a tRNA, entering the A-site of stalled ribosomes, displacing the stalled mRNA. The ribosome then switches to translate the ORF on the tmRNA; the nascent peptide is terminated with the 'tag peptide' encoded by the tmRNA and targeted for degradation. The ribosome is freed to recommence translation, which seems to be the essential function of trans-translation. The chain is SsrA-binding protein from Bacillus cereus (strain 03BB102).